Consider the following 815-residue polypeptide: Phosphatidylinositol 4-phosphate 5-kinase 9 (815 aa).

8 MORN repeats span residues 58–80 (YSGS…DGCV), 81–103 (YDGE…SGAS), 104–126 (YDGE…NKLT), 127–149 (YKGR…NGDV), 150–172 (FEGS…NKNV), 173–195 (YLGD…TGDS), 196–218 (YEGS…DGGC), and 219–240 (YVGT…AGTR). The PIPK domain occupies 391-809 (GHRSYDLMLS…RFLEFIKKVF (419 aa)). The tract at residues 769–790 (YNMTKKIEHAYKSLHFDSLSIS) is activation loop.

Interacts with CINV1. In terms of tissue distribution, widely expressed.

The protein localises to the membrane. It is found in the nucleus. It catalyses the reaction a 1,2-diacyl-sn-glycero-3-phospho-(1D-myo-inositol 4-phosphate) + ATP = a 1,2-diacyl-sn-glycero-3-phospho-(1D-myo-inositol-4,5-bisphosphate) + ADP + H(+). Functionally, plays a role in sugar-mediated root development. Interaction with CINV1 induces repression of CINV1 activity and negative regulation of sugar-mediated root cell elongation. This chain is Phosphatidylinositol 4-phosphate 5-kinase 9 (PIP5K9), found in Arabidopsis thaliana (Mouse-ear cress).